The following is a 367-amino-acid chain: Alanine racemase (367 aa).

K40 acts as the Proton acceptor; specific for D-alanine in catalysis. An N6-(pyridoxal phosphate)lysine modification is found at K40. R136 contributes to the substrate binding site. Catalysis depends on Y263, which acts as the Proton acceptor; specific for L-alanine. M310 serves as a coordination point for substrate.

It belongs to the alanine racemase family. Requires pyridoxal 5'-phosphate as cofactor.

The enzyme catalyses L-alanine = D-alanine. Its pathway is amino-acid biosynthesis; D-alanine biosynthesis; D-alanine from L-alanine: step 1/1. Functionally, catalyzes the interconversion of L-alanine and D-alanine. May also act on other amino acids. The chain is Alanine racemase (alr) from Streptococcus pneumoniae serotype 19F (strain G54).